We begin with the raw amino-acid sequence, 354 residues long: Homeobox-leucine zipper protein HOX27 (354 aa).

The segment at 98–175 (SVAAGAPGME…DDEGASARKK (78 aa)) is disordered. Positions 148–157 (QGGGGGGGGE) are enriched in gly residues. The homeobox DNA-binding region spans 171–230 (SARKKLRLSKEQSAFLEESFKEHSTLNPKQKVALAKQLNLRPRQVEVWFQNRRARTKLKQ). Positions 229 to 273 (KQTEVDCEYLKRCCETLTEENRRLHKELAELRALKTARPFYMHLP) are leucine-zipper. A disordered region spans residues 294–323 (STSAPAAATSPAAAPTAAARTAVASPEPHR).

This sequence belongs to the HD-ZIP homeobox family. Class II subfamily. As to expression, expressed in seedlings, roots, stems, leaf sheaths and blades and panicles.

It localises to the nucleus. Functionally, probable transcription factor. The sequence is that of Homeobox-leucine zipper protein HOX27 (HOX27) from Oryza sativa subsp. japonica (Rice).